We begin with the raw amino-acid sequence, 292 residues long: NAD kinase (292 aa).

D73 serves as the catalytic Proton acceptor. NAD(+)-binding positions include 73 to 74 (DG), 147 to 148 (NE), H158, R175, D177, 188 to 193 (TAYSLS), and Q247.

Belongs to the NAD kinase family. Requires a divalent metal cation as cofactor.

It is found in the cytoplasm. It carries out the reaction NAD(+) + ATP = ADP + NADP(+) + H(+). In terms of biological role, involved in the regulation of the intracellular balance of NAD and NADP, and is a key enzyme in the biosynthesis of NADP. Catalyzes specifically the phosphorylation on 2'-hydroxyl of the adenosine moiety of NAD to yield NADP. In Sodalis glossinidius (strain morsitans), this protein is NAD kinase.